The primary structure comprises 174 residues: RNA pyrophosphohydrolase (174 aa).

One can recognise a Nudix hydrolase domain in the interval 6 to 149 (GYRPNVGIIL…KRDVYERALS (144 aa)). A Nudix box motif is present at residues 38-59 (GGIKPGESPEAAMYRELLEEVG).

Belongs to the Nudix hydrolase family. RppH subfamily. It depends on a divalent metal cation as a cofactor.

Functionally, accelerates the degradation of transcripts by removing pyrophosphate from the 5'-end of triphosphorylated RNA, leading to a more labile monophosphorylated state that can stimulate subsequent ribonuclease cleavage. This is RNA pyrophosphohydrolase from Chromobacterium violaceum (strain ATCC 12472 / DSM 30191 / JCM 1249 / CCUG 213 / NBRC 12614 / NCIMB 9131 / NCTC 9757 / MK).